We begin with the raw amino-acid sequence, 191 residues long: UPF0149 protein VC_2476 (191 aa).

The protein belongs to the UPF0149 family.

The polypeptide is UPF0149 protein VC_2476 (Vibrio cholerae serotype O1 (strain ATCC 39315 / El Tor Inaba N16961)).